Here is a 96-residue protein sequence, read N- to C-terminus: Myoglobin (96 aa).

The Globin domain maps to 1-96 (GLSDGEWQLV…AKTKELGFLG (96 aa)). S3 bears the Phosphoserine mark. H61 serves as a coordination point for nitrite. H61 contacts O2. T64 carries the phosphothreonine modification.

This sequence belongs to the globin family. Monomeric.

The protein resides in the cytoplasm. The protein localises to the sarcoplasm. It carries out the reaction Fe(III)-heme b-[protein] + nitric oxide + H2O = Fe(II)-heme b-[protein] + nitrite + 2 H(+). The enzyme catalyses H2O2 + AH2 = A + 2 H2O. In terms of biological role, monomeric heme protein which primary function is to store oxygen and facilitate its diffusion within muscle tissues. Reversibly binds oxygen through a pentacoordinated heme iron and enables its timely and efficient release as needed during periods of heightened demand. Depending on the oxidative conditions of tissues and cells, and in addition to its ability to bind oxygen, it also has a nitrite reductase activity whereby it regulates the production of bioactive nitric oxide. Under stress conditions, like hypoxia and anoxia, it also protects cells against reactive oxygen species thanks to its pseudoperoxidase activity. This is Myoglobin (MB) from Ailuropoda melanoleuca (Giant panda).